Consider the following 107-residue polypeptide: uncharacterized protein (107 aa).

The next 3 membrane-spanning stretches (helical) occupy residues 20–40 (FISL…EVGI), 49–69 (PAIL…ISTV), and 86–106 (VVML…KLFL).

Its subcellular location is the membrane. This is an uncharacterized protein from Saccharomyces cerevisiae (strain ATCC 204508 / S288c) (Baker's yeast).